Reading from the N-terminus, the 482-residue chain is Catalase (482 aa).

The segment covering 1-11 (MNAMTNKTLTT) has biased composition (polar residues). The tract at residues 1-21 (MNAMTNKTLTTAAGAPVADNN) is disordered. Catalysis depends on residues histidine 57 and asparagine 130. Position 340 (tyrosine 340) interacts with heme.

Belongs to the catalase family. As to quaternary structure, homodimer. It depends on heme as a cofactor.

It catalyses the reaction 2 H2O2 = O2 + 2 H2O. Functionally, decomposes hydrogen peroxide into water and oxygen; serves to protect cells from the toxic effects of hydrogen peroxide. This chain is Catalase (katA), found in Bordetella bronchiseptica (strain ATCC BAA-588 / NCTC 13252 / RB50) (Alcaligenes bronchisepticus).